The following is a 755-amino-acid chain: Atypical kinase coq-8, mitochondrial (755 aa).

Residues 57–78 (QDVDPLKEPNKTNAPLLSPTLP) form a disordered region. Residues 67 to 78 (KTNAPLLSPTLP) are compositionally biased toward polar residues. ATP contacts are provided by residues 435–443 (FACASIGQV) and lysine 457. The active-site Proton acceptor is the aspartate 587.

It belongs to the protein kinase superfamily. ADCK protein kinase family.

Its subcellular location is the mitochondrion. It functions in the pathway cofactor biosynthesis; ubiquinone biosynthesis. In terms of biological role, atypical kinase involved in the biosynthesis of coenzyme Q, also named ubiquinone, an essential lipid-soluble electron transporter for aerobic cellular respiration. Its substrate specificity is still unclear: may act as a protein kinase that mediates phosphorylation of coq-3. According to other reports, acts as a small molecule kinase, possibly a lipid kinase that phosphorylates a prenyl lipid in the ubiquinone biosynthesis pathway, as suggested by its ability to bind coenzyme Q lipid intermediates. This Caenorhabditis elegans protein is Atypical kinase coq-8, mitochondrial (coq-8).